We begin with the raw amino-acid sequence, 470 residues long: Chromosomal replication initiator protein DnaA (470 aa).

The interval Met1 to Ile89 is domain I, interacts with DnaA modulators. The segment at Ile89–Pro130 is domain II. Positions His131–Ser348 are domain III, AAA+ region. ATP is bound by residues Gly176, Gly178, Lys179, and Thr180. Positions Thr349–Ala470 are domain IV, binds dsDNA.

Belongs to the DnaA family. As to quaternary structure, oligomerizes as a right-handed, spiral filament on DNA at oriC.

The protein localises to the cytoplasm. In terms of biological role, plays an essential role in the initiation and regulation of chromosomal replication. ATP-DnaA binds to the origin of replication (oriC) to initiate formation of the DNA replication initiation complex once per cell cycle. Binds the DnaA box (a 9 base pair repeat at the origin) and separates the double-stranded (ds)DNA. Forms a right-handed helical filament on oriC DNA; dsDNA binds to the exterior of the filament while single-stranded (ss)DNA is stabiized in the filament's interior. The ATP-DnaA-oriC complex binds and stabilizes one strand of the AT-rich DNA unwinding element (DUE), permitting loading of DNA polymerase. After initiation quickly degrades to an ADP-DnaA complex that is not apt for DNA replication. Binds acidic phospholipids. In Bacteroides thetaiotaomicron (strain ATCC 29148 / DSM 2079 / JCM 5827 / CCUG 10774 / NCTC 10582 / VPI-5482 / E50), this protein is Chromosomal replication initiator protein DnaA.